The sequence spans 266 residues: 15-hydroxyprostaglandin dehydrogenase [NAD(+)] (266 aa).

NAD(+) contacts are provided by residues 12–20, 36–37, 63–65, and Asn-91; these read GAAQGIGRA, DW, and CDV. Positions 138 and 148 each coordinate substrate. Catalysis depends on Tyr-151, which acts as the Proton acceptor. Residues 151 to 155 and 186 to 188 each bind NAD(+); these read YCASK and VDT.

Belongs to the short-chain dehydrogenases/reductases (SDR) family. As to quaternary structure, homodimer.

The protein localises to the cytoplasm. The catalysed reaction is prostaglandin E2 + NAD(+) = 15-oxoprostaglandin E2 + NADH + H(+). It carries out the reaction (15S)-hydroxy-(5Z,8Z,11Z,13E)-eicosatetraenoate + NAD(+) = 15-oxo-(5Z,8Z,11Z,13E)-eicosatetraenoate + NADH + H(+). The enzyme catalyses (11R)-hydroxy-(5Z,8Z,12E,14Z)-eicosatetraenoate + NAD(+) = 11-oxo-(5Z,8Z,12E,14Z)-eicosatetraenoate + NADH + H(+). It catalyses the reaction lipoxin A4 + NAD(+) = 15-oxo-(5S,6R)-dihydroxy-(7E,9E,11Z,13E)-eicosatetraenoate + NADH + H(+). The catalysed reaction is 15-oxo-(5S,6R)-dihydroxy-(7E,9E,11Z)-eicosatrienoate + NADH + H(+) = (5S,6R,15S)-trihydroxy-(7E,9E,11Z)-eicosatrienoate + NAD(+). It carries out the reaction prostaglandin A1 + NAD(+) = 15-oxo-prostaglandin A1 + NADH + H(+). The enzyme catalyses prostaglandin E1 + NAD(+) = 15-oxoprostaglandin E1 + NADH + H(+). It catalyses the reaction 14-hydroxy-(4Z,7Z,10Z,12E,16Z,19Z)-docosahexaenoate + NAD(+) = 14-oxo-(4Z,7Z,10Z,12E,16Z,19Z)-docosahexaenoate + NADH + H(+). The catalysed reaction is resolvin E1 + NAD(+) = 18-oxo-resolvin E1 + NADH + H(+). It carries out the reaction resolvin D1 + NAD(+) = 8-oxoresolvin D1 + NADH + H(+). The enzyme catalyses resolvin D1 + NAD(+) = 17-oxoresolvin D1 + NADH + H(+). It catalyses the reaction resolvin D2 + NAD(+) = 7-oxoresolvin D2 + NADH + H(+). The catalysed reaction is resolvin D2 + NAD(+) = 16-oxoresolvin D2 + NADH + H(+). In terms of biological role, catalyzes the NAD-dependent dehydrogenation (oxidation) of a broad array of hydroxylated polyunsaturated fatty acids (mainly eicosanoids and docosanoids, including prostaglandins, lipoxins and resolvins), yielding their corresponding keto (oxo) metabolites. Decreases the levels of the pro-proliferative prostaglandins such as prostaglandin E2 (whose activity is increased in cancer because of an increase in the expression of cyclooxygenase 2) and generates oxo-fatty acid products that can profoundly influence cell function by abrogating pro-inflammatory cytokine expression. Converts resolvins E1, D1 and D2 to their oxo products, which represents a mode of resolvin inactivation. Resolvin E1 plays important roles during the resolution phase of acute inflammation, while resolvins D1 and D2 have a unique role in obesity-induced adipose inflammation. This Bos taurus (Bovine) protein is 15-hydroxyprostaglandin dehydrogenase [NAD(+)] (HPGD).